Reading from the N-terminus, the 89-residue chain is MALLDFFLSRKKNTANIAKERLQIIVAERRRGDAEPHYLPQLRKDILEVICKYVQIDPEMVSVQLEQRDGDISILELNVTLPETEESKS.

This sequence belongs to the MinE family.

Its function is as follows. Prevents the cell division inhibition by proteins MinC and MinD at internal division sites while permitting inhibition at polar sites. This ensures cell division at the proper site by restricting the formation of a division septum at the midpoint of the long axis of the cell. The polypeptide is Cell division topological specificity factor (Klebsiella pneumoniae subsp. pneumoniae (strain ATCC 700721 / MGH 78578)).